Here is a 969-residue protein sequence, read N- to C-terminus: RNA polymerase-associated protein RapA (969 aa).

The region spanning 164-334 (EVGRRYAPRV…FARLRLLDPD (171 aa)) is the Helicase ATP-binding domain. 177–184 (DEVGLGKT) lines the ATP pocket. A DEAH box motif is present at residues 280–283 (DEAH). The 181-residue stretch at 492-672 (RVNWLLELLK…GLEPLIEESA (181 aa)) folds into the Helicase C-terminal domain.

This sequence belongs to the SNF2/RAD54 helicase family. RapA subfamily. As to quaternary structure, interacts with the RNAP. Has a higher affinity for the core RNAP than for the holoenzyme. Its ATPase activity is stimulated by binding to RNAP.

In terms of biological role, transcription regulator that activates transcription by stimulating RNA polymerase (RNAP) recycling in case of stress conditions such as supercoiled DNA or high salt concentrations. Probably acts by releasing the RNAP, when it is trapped or immobilized on tightly supercoiled DNA. Does not activate transcription on linear DNA. Probably not involved in DNA repair. The sequence is that of RNA polymerase-associated protein RapA from Aliivibrio salmonicida (strain LFI1238) (Vibrio salmonicida (strain LFI1238)).